Here is a 96-residue protein sequence, read N- to C-terminus: Co-chaperonin GroES (96 aa).

The protein belongs to the GroES chaperonin family. In terms of assembly, heptamer of 7 subunits arranged in a ring. Interacts with the chaperonin GroEL.

It localises to the cytoplasm. Its function is as follows. Together with the chaperonin GroEL, plays an essential role in assisting protein folding. The GroEL-GroES system forms a nano-cage that allows encapsulation of the non-native substrate proteins and provides a physical environment optimized to promote and accelerate protein folding. GroES binds to the apical surface of the GroEL ring, thereby capping the opening of the GroEL channel. The chain is Co-chaperonin GroES from Trichlorobacter lovleyi (strain ATCC BAA-1151 / DSM 17278 / SZ) (Geobacter lovleyi).